The following is a 24-amino-acid chain: Citropin-3.1.2 (24 aa).

As to expression, expressed by the dorsal and submental skin glands.

It localises to the secreted. This is Citropin-3.1.2 from Ranoidea citropa (Australian Blue Mountains tree frog).